The following is a 212-amino-acid chain: Peptide methionine sulfoxide reductase MsrA (212 aa).

The active site involves Cys-52.

It belongs to the MsrA Met sulfoxide reductase family.

The catalysed reaction is L-methionyl-[protein] + [thioredoxin]-disulfide + H2O = L-methionyl-(S)-S-oxide-[protein] + [thioredoxin]-dithiol. The enzyme catalyses [thioredoxin]-disulfide + L-methionine + H2O = L-methionine (S)-S-oxide + [thioredoxin]-dithiol. In terms of biological role, has an important function as a repair enzyme for proteins that have been inactivated by oxidation. Catalyzes the reversible oxidation-reduction of methionine sulfoxide in proteins to methionine. In Escherichia coli O6:K15:H31 (strain 536 / UPEC), this protein is Peptide methionine sulfoxide reductase MsrA.